The sequence spans 906 residues: Protein translocase subunit SecA (906 aa).

ATP is bound by residues Gln-86, 104 to 108, and Asp-499; that span reads GEGKT. The segment at 862–885 is disordered; the sequence is KPVVSRIDPKDRNPDDPTSWGRVS. Zn(2+)-binding residues include Cys-890, Cys-892, Cys-901, and His-902.

Belongs to the SecA family. As to quaternary structure, monomer and homodimer. Part of the essential Sec protein translocation apparatus which comprises SecA, SecYEG and auxiliary proteins SecDF-YajC and YidC. It depends on Zn(2+) as a cofactor.

The protein resides in the cell inner membrane. The protein localises to the cytoplasm. It catalyses the reaction ATP + H2O + cellular proteinSide 1 = ADP + phosphate + cellular proteinSide 2.. In terms of biological role, part of the Sec protein translocase complex. Interacts with the SecYEG preprotein conducting channel. Has a central role in coupling the hydrolysis of ATP to the transfer of proteins into and across the cell membrane, serving both as a receptor for the preprotein-SecB complex and as an ATP-driven molecular motor driving the stepwise translocation of polypeptide chains across the membrane. The sequence is that of Protein translocase subunit SecA from Rickettsia massiliae (strain Mtu5).